The primary structure comprises 240 residues: Small ribosomal subunit protein uS2c (240 aa).

This sequence belongs to the universal ribosomal protein uS2 family.

It localises to the plastid. Its subcellular location is the chloroplast. The protein is Small ribosomal subunit protein uS2c (rps2) of Euglena gracilis.